The sequence spans 184 residues: Latex serine proteinase inhibitor (184 aa).

The cysteines at positions 45 and 89 are disulfide-linked. 2 N-linked (GlcNAc...) asparagine glycosylation sites follow: Asn-84 and Asn-90. Cysteines 142 and 153 form a disulfide.

The protein belongs to the protease inhibitor I3 (leguminous Kunitz-type inhibitor) family.

It is found in the secreted. It localises to the extracellular space. This Carica papaya (Papaya) protein is Latex serine proteinase inhibitor.